The primary structure comprises 312 residues: tRNA pseudouridine synthase B (312 aa).

Aspartate 37 functions as the Nucleophile in the catalytic mechanism.

Belongs to the pseudouridine synthase TruB family. Type 1 subfamily.

It catalyses the reaction uridine(55) in tRNA = pseudouridine(55) in tRNA. Responsible for synthesis of pseudouridine from uracil-55 in the psi GC loop of transfer RNAs. This is tRNA pseudouridine synthase B from Deinococcus geothermalis (strain DSM 11300 / CIP 105573 / AG-3a).